Here is a 455-residue protein sequence, read N- to C-terminus: Beta-1,4-mannosyltransferase bre-3 (455 aa).

The protein belongs to the glycosyltransferase 2 family.

The protein localises to the cytoplasm. It functions in the pathway protein modification; protein glycosylation. In terms of biological role, glycosyltransferase with a proposed role in glycosphingolipid biosynthesis. Involved in susceptibility to pore-forming crystal toxins in conjunction with bre-1, bre-2 and bre-4. Involved in resistance to the nematotoxic C.cinerea galectin Cgl2. Has a role in determining brood size. This Caenorhabditis briggsae protein is Beta-1,4-mannosyltransferase bre-3.